We begin with the raw amino-acid sequence, 1682 residues long: Calmodulin-binding transcription activator 1 (1682 aa).

Residues 63–188 (KCSSLPKERH…YLNVPAIEDC (126 aa)) constitute a DNA-binding region (CG-1). A Nuclear localization signal motif is present at residues 112–119 (RKKVKYRK). 2 disordered regions span residues 284-375 (RIIS…MVDS) and 599-622 (SSFSQTGHSPHIHQTPSPSFFLQD). A compositionally biased stretch (basic and acidic residues) spans 302–327 (EVQHNDVSEGKHEPSHGRSTSREKRN). Composition is skewed to polar residues over residues 337–367 (HQNSTEVSSTNQVEVPDTTQSSPVSISSGLN) and 599–618 (SSFSQTGHSPHIHQTPSPSF). Residues 877–955 (DYSPEWSYPE…ISNSVVFEYK (79 aa)) form the IPT/TIG domain. The segment at 992 to 1020 (MAEMTGSQQHKQASGGGGSGSGSGSGAGG) is disordered. The span at 1005-1020 (SGGGGSGSGSGSGAGG) shows a compositional bias: gly residues. ANK repeat units follow at residues 1066–1095 (RGMTLLHLAAAQGYATLIQTLIKWRTKHAD), 1111–1141 (FSCTPLMWACALGHLEAAVVLYKWDRRAISI), and 1145–1174 (LGRLPLGIARSRGHVKLAECLEHLQRDEQA). 2 disordered regions span residues 1217 to 1249 (ASTNPELRRPRSEPSNYYSTEGHKDYPAPKKHK) and 1267 to 1318 (LSLE…SASQ). The span at 1268–1291 (SLEQPNIRKQSPRSKQPSPETISP) shows a compositional bias: polar residues. Residues 1308 to 1318 (ETAASQASASQ) show a composition bias toward low complexity. 3 consecutive IQ domains span residues 1549 to 1585 (QEVAAAVIQRCYRKYKQLTWIALKYALYKKMTQAAIL), 1586 to 1608 (IQSKFRSYYEQKRFQQSRRAAVL), and 1609 to 1631 (IQNFYRSYKKCGRRRPARRTAVI).

It belongs to the CAMTA family. In terms of assembly, may interact with calmodulin.

The protein localises to the nucleus. Its subcellular location is the cytoplasm. Transcriptional activator. This Mus musculus (Mouse) protein is Calmodulin-binding transcription activator 1.